The primary structure comprises 133 residues: Small ribosomal subunit protein uS8 (133 aa).

Belongs to the universal ribosomal protein uS8 family. Part of the 30S ribosomal subunit. Contacts proteins S5 and S12.

One of the primary rRNA binding proteins, it binds directly to 16S rRNA central domain where it helps coordinate assembly of the platform of the 30S subunit. This chain is Small ribosomal subunit protein uS8, found in Synechococcus sp. (strain CC9605).